A 445-amino-acid chain; its full sequence is Exodeoxyribonuclease 7 large subunit (445 aa).

This sequence belongs to the XseA family. In terms of assembly, heterooligomer composed of large and small subunits.

Its subcellular location is the cytoplasm. The catalysed reaction is Exonucleolytic cleavage in either 5'- to 3'- or 3'- to 5'-direction to yield nucleoside 5'-phosphates.. In terms of biological role, bidirectionally degrades single-stranded DNA into large acid-insoluble oligonucleotides, which are then degraded further into small acid-soluble oligonucleotides. The protein is Exodeoxyribonuclease 7 large subunit of Pasteurella multocida (strain Pm70).